Reading from the N-terminus, the 1000-residue chain is Sop-2-related protein 1 (1000 aa).

3 disordered regions span residues 355 to 374, 379 to 422, and 466 to 509; these read KIMK…QYQQ, HQQH…GPSE, and APSE…VARG. Over residues 390-404 the composition is skewed to low complexity; that stretch reads SSSSVPSTSSPSCSS. Residues 406-415 show a composition bias toward basic and acidic residues; that stretch reads ANRKEMETVR. Residues 489–502 are compositionally biased toward low complexity; sequence GPSQQQQIPGTSQQ. The segment at 633–720 is RNA-binding; the sequence is REQILPQQYM…LNTSSVQPSE (88 aa). The tract at residues 948-1000 is disordered; that stretch reads HRMHSQRPPSMGNSSTSSEASSTSPTNAATATSSPASNRPTTSTAQPPTLNPT. The segment covering 960-992 has biased composition (low complexity); it reads NSSTSSEASSTSPTNAATATSSPASNRPTTSTA.

As to quaternary structure, binds through its N-terminal region to the N-terminal region of sop-2.

It localises to the nucleus. Functionally, acts synergistically with sop-2 to maintain the transcriptionally repressive state of homeotic genes throughout development. Not required to initiate repression, but to maintain it during later stages of development. Also required to repress expression of other genes. Binds RNA in a sequence-independent manner. In Caenorhabditis elegans, this protein is Sop-2-related protein 1 (sor-1).